Reading from the N-terminus, the 300-residue chain is Ribosomal protein L11 methyltransferase (300 aa).

The S-adenosyl-L-methionine site is built by Thr152, Gly173, Asp195, and Asn234.

Belongs to the methyltransferase superfamily. PrmA family.

The protein resides in the cytoplasm. The catalysed reaction is L-lysyl-[protein] + 3 S-adenosyl-L-methionine = N(6),N(6),N(6)-trimethyl-L-lysyl-[protein] + 3 S-adenosyl-L-homocysteine + 3 H(+). Methylates ribosomal protein L11. In Burkholderia pseudomallei (strain K96243), this protein is Ribosomal protein L11 methyltransferase.